A 510-amino-acid polypeptide reads, in one-letter code: GTPase Der (510 aa).

EngA-type G domains are found at residues 3-166 (PVVA…ATAL) and 220-393 (IKIA…ACAT). GTP-binding positions include 9–16 (GRPNVGKS), 56–60 (DTGGI), 118–121 (NKTD), 226–233 (GRPNVGKS), 273–277 (DTAGV), and 338–341 (NKWD). One can recognise a KH-like domain in the interval 394–478 (QKTSTSMLTR…PIRIQFQEGN (85 aa)).

It belongs to the TRAFAC class TrmE-Era-EngA-EngB-Septin-like GTPase superfamily. EngA (Der) GTPase family. As to quaternary structure, associates with the 50S ribosomal subunit.

Functionally, GTPase that plays an essential role in the late steps of ribosome biogenesis. The protein is GTPase Der of Haemophilus ducreyi (strain 35000HP / ATCC 700724).